The primary structure comprises 20 residues: Large ribosomal subunit protein uL5 (20 aa).

The protein belongs to the universal ribosomal protein uL5 family. In terms of assembly, part of the 50S ribosomal subunit; part of the 5S rRNA/L5/L18/L25 subcomplex. Contacts the 5S rRNA and the P site tRNA. Forms a bridge to the 30S subunit in the 70S ribosome.

Functionally, this is one of the proteins that bind and probably mediate the attachment of the 5S RNA into the large ribosomal subunit, where it forms part of the central protuberance. In the 70S ribosome it contacts protein S13 of the 30S subunit (bridge B1b), connecting the two subunits; this bridge is implicated in subunit movement. Contacts the P site tRNA; the 5S rRNA and some of its associated proteins might help stabilize positioning of ribosome-bound tRNAs. The polypeptide is Large ribosomal subunit protein uL5 (rplE) (Bacillus cereus).